Consider the following 775-residue polypeptide: Mitochondrial intermediate peptidase (775 aa).

The N-terminal 28 residues, 1-28 (MIARPARDVLSSATKKQFRFRGCLAARH), are a transit peptide targeting the mitochondrion. His-558 serves as a coordination point for Zn(2+). Glu-559 is an active-site residue. Residues His-562 and His-565 each contribute to the Zn(2+) site.

The protein belongs to the peptidase M3 family. Requires Zn(2+) as cofactor.

The protein localises to the mitochondrion matrix. The catalysed reaction is Release of an N-terminal octapeptide as second stage of processing of some proteins imported into the mitochondrion.. In terms of biological role, cleaves proteins, imported into the mitochondrion, to their mature size. While most mitochondrial precursor proteins are processed to the mature form in one step by mitochondrial processing peptidase (MPP), the sequential cleavage by MIP of an octapeptide after initial processing by MPP is a required step for a subgroup of nuclear-encoded precursor proteins destined for the matrix or the inner membrane. This Schizophyllum commune (Split gill fungus) protein is Mitochondrial intermediate peptidase (OCT1).